The sequence spans 416 residues: Histidine--tRNA ligase (416 aa).

This sequence belongs to the class-II aminoacyl-tRNA synthetase family. As to quaternary structure, homodimer.

The protein resides in the cytoplasm. The catalysed reaction is tRNA(His) + L-histidine + ATP = L-histidyl-tRNA(His) + AMP + diphosphate + H(+). The protein is Histidine--tRNA ligase of Clostridium kluyveri (strain NBRC 12016).